The sequence spans 209 residues: Redox-sensing transcriptional repressor Rex (209 aa).

Positions 16-55 form a DNA-binding region, H-T-H motif; sequence LYYRFIQNLSLSGKQRVSSAELSEAVKVDSATIRRDFSYF. 90 to 95 provides a ligand contact to NAD(+); it reads GVGNLG.

The protein belongs to the transcriptional regulatory Rex family. Homodimer.

It is found in the cytoplasm. Its function is as follows. Modulates transcription in response to changes in cellular NADH/NAD(+) redox state. This chain is Redox-sensing transcriptional repressor Rex, found in Bacillus cereus (strain Q1).